The primary structure comprises 614 residues: Phosphomethylpyrimidine synthase (614 aa).

Substrate contacts are provided by residues N226, M255, Y284, H320, 340 to 342 (SRG), 381 to 384 (DGLR), and E420. H424 contributes to the Zn(2+) binding site. Y447 serves as a coordination point for substrate. H488 contributes to the Zn(2+) binding site. [4Fe-4S] cluster is bound by residues C568, C571, and C576.

This sequence belongs to the ThiC family. As to quaternary structure, homodimer. [4Fe-4S] cluster is required as a cofactor.

It carries out the reaction 5-amino-1-(5-phospho-beta-D-ribosyl)imidazole + S-adenosyl-L-methionine = 4-amino-2-methyl-5-(phosphooxymethyl)pyrimidine + CO + 5'-deoxyadenosine + formate + L-methionine + 3 H(+). It participates in cofactor biosynthesis; thiamine diphosphate biosynthesis. Functionally, catalyzes the synthesis of the hydroxymethylpyrimidine phosphate (HMP-P) moiety of thiamine from aminoimidazole ribotide (AIR) in a radical S-adenosyl-L-methionine (SAM)-dependent reaction. This chain is Phosphomethylpyrimidine synthase, found in Acidovorax sp. (strain JS42).